The following is a 119-amino-acid chain: Large ribosomal subunit protein bL20 (119 aa).

It belongs to the bacterial ribosomal protein bL20 family. As to quaternary structure, part of the 50S ribosomal subunit.

Functionally, binds directly to 23S ribosomal RNA and is necessary for the in vitro assembly process of the 50S ribosomal subunit. It is not involved in the protein synthesizing functions of that subunit. The protein is Large ribosomal subunit protein bL20 (rplT) of Bacillus subtilis (strain 168).